The primary structure comprises 634 residues: Ankyrin repeat and SOCS box protein 2 (634 aa).

One can recognise a UIM domain in the interval 26–45; sequence SEEELLQMAIEQSLADKTRG. The disordered stretch occupies residues 36–82; sequence EQSLADKTRGPTPAEASASSQTNHQPGHFHPWTRSPSSPENPPARAP. ANK repeat units lie at residues 104-133, 137-167, 171-200, 204-233, 237-266, 270-299, 303-332, 336-365, 368-397, 410-439, 440-469, and 476-504; these read AAMD…NLAE, EGWL…TIDQ, QEET…EPDI, SRET…DANH, RGWT…KVEA, YSIT…DINT, DSAS…DANK, DGLL…RTRV, SGIS…DVNA, RRSS…DPNR, DVIS…NIDA, and TAFP…DGEP. S371 carries the post-translational modification Phosphoserine. The 55-residue stretch at 580 to 634 folds into the SOCS box domain; the sequence is EDWAVIKEKAEPPRPLAHLCRLRVRKAIGKYRIKLLDTLPLPGRLIRYLKYENTQ.

Belongs to the ankyrin SOCS box (ASB) family. In terms of assembly, component of a probable ECS E3 ubiquitin-protein ligase complex which contains CUL5, either RBX1 or RNF7/RBX2, Elongin BC complex (ELOB and ELOC) and ASB2. Interacts with SKP2. Through its interaction with SKP2, likely to bridge the formation of dimeric E3-ubiquitin-protein ligase complexes composed of an ECS complex and an SCF(SKP2) complex. Interacts with JAK2; the interaction targets JAK2 for Notch-mediated proteasomal degradation. Interacts with TCF3/E2A; the interaction is mediated by SKP2 and targets TCF3 for Notch-mediated proteasomal degradation. As to quaternary structure, interacts with DES. Monoubiquitinated. Post-translationally, not monoubiquitinated. In terms of processing, phosphorylation at Ser-371 is required for association with FLNA and subsequent FLNA degradation. As to expression, highest expression in muscle, heart and spleen. Highly expressed in cells of the first and second heart fields in the developing embryonic heart. At 9.5 dpc, robust expression predominantly in the left and right ventricles (RV) and to a lower extent in inflow and outflow tracts. At 10.5 and 11.5 dpc, expression is restricted to the myocardium with no expression observed in the endocardium. In terms of tissue distribution, not expressed in immature dendritic cells. Highly expressed in adult skeletal muscle with very low levels in adult bone marrow. Expressed in immature dendritic cells and in primary dendritic cells derived from the spleen. Highly expressed in adult bone marrow with negligible levels in adult skeletal muscle. Expressed at higher levels in T helper type 2 (Th2) cells than in regulatory T (Treg) cells, type 1 helper T (Th1) cells and T helper 17 (Th17) cells.

It localises to the cytoplasm. The protein resides in the cytoskeleton. It is found in the stress fiber. The protein localises to the myofibril. Its subcellular location is the sarcomere. It localises to the z line. It functions in the pathway protein modification; protein ubiquitination. Substrate-recognition component of a SCF-like ECS (Elongin-Cullin-SOCS-box protein) E3 ubiquitin-protein ligase complex which mediates the ubiquitination and subsequent proteasomal degradation of target proteins. Mediates Notch-induced ubiquitination and degradation of substrates including TCF3/E2A and JAK2. Required during embryonic heart development for complete heart looping. Required for cardiomyocyte differentiation. Specifically promotes the ubiquitination of SMAD9 and targets it for proteasomal degradation, leading to avoid excessive accumulation of SMAD9. Plays a role in the regulation of NK-cell migration by modulating protein levels of filamin A/FLNA via regulation of its ubiquitination and proteasome degradation. Its function is as follows. Involved in myogenic differentiation and targets filamin FLNB for proteasomal degradation but not filamin FLNA. Also targets DES for proteasomal degradation. Acts as a negative regulator of skeletal muscle mass. Functionally, targets filamins FLNA and FLNB for proteasomal degradation. This leads to enhanced adhesion of hematopoietic cells to fibronectin. Required for FLNA degradation in immature cardiomyocytes which is necessary for actin cytoskeleton remodeling, leading to proper organization of myofibrils and function of mature cardiomyocytes. Required for degradation of FLNA and FLNB in immature dendritic cells (DC) which enhances immature DC migration by promoting DC podosome formation and DC-mediated degradation of the extracellular matrix. Does not promote proteasomal degradation of tyrosine-protein kinases JAK1 or JAK2 in hematopoietic cells. The protein is Ankyrin repeat and SOCS box protein 2 of Mus musculus (Mouse).